Reading from the N-terminus, the 271-residue chain is Ribosomal RNA small subunit methyltransferase A (271 aa).

S-adenosyl-L-methionine-binding residues include histidine 11, leucine 13, glycine 38, glutamate 58, aspartate 86, and asparagine 101.

Belongs to the class I-like SAM-binding methyltransferase superfamily. rRNA adenine N(6)-methyltransferase family. RsmA subfamily.

It is found in the cytoplasm. The enzyme catalyses adenosine(1518)/adenosine(1519) in 16S rRNA + 4 S-adenosyl-L-methionine = N(6)-dimethyladenosine(1518)/N(6)-dimethyladenosine(1519) in 16S rRNA + 4 S-adenosyl-L-homocysteine + 4 H(+). Its function is as follows. Specifically dimethylates two adjacent adenosines (A1518 and A1519) in the loop of a conserved hairpin near the 3'-end of 16S rRNA in the 30S particle. May play a critical role in biogenesis of 30S subunits. The sequence is that of Ribosomal RNA small subunit methyltransferase A from Helicobacter pylori (strain P12).